The chain runs to 399 residues: Imidazolonepropionase (399 aa).

Over residues 1–13 (MSETLYTGISQLA) the composition is skewed to polar residues. The segment at 1–20 (MSETLYTGISQLATPRPGPQ) is disordered. Fe(3+)-binding residues include His74 and His76. Zn(2+) contacts are provided by His74 and His76. Positions 83, 146, and 176 each coordinate 4-imidazolone-5-propanoate. Residue Tyr146 participates in N-formimidoyl-L-glutamate binding. His238 contributes to the Fe(3+) binding site. Residue His238 coordinates Zn(2+). Gln241 serves as a coordination point for 4-imidazolone-5-propanoate. Asp312 is a Fe(3+) binding site. Asp312 is a binding site for Zn(2+). The N-formimidoyl-L-glutamate site is built by Asn314 and Gly316. Ser317 contacts 4-imidazolone-5-propanoate.

Belongs to the metallo-dependent hydrolases superfamily. HutI family. The cofactor is Zn(2+). It depends on Fe(3+) as a cofactor.

It localises to the cytoplasm. The catalysed reaction is 4-imidazolone-5-propanoate + H2O = N-formimidoyl-L-glutamate. The protein operates within amino-acid degradation; L-histidine degradation into L-glutamate; N-formimidoyl-L-glutamate from L-histidine: step 3/3. In terms of biological role, catalyzes the hydrolytic cleavage of the carbon-nitrogen bond in imidazolone-5-propanoate to yield N-formimidoyl-L-glutamate. It is the third step in the universal histidine degradation pathway. In Deinococcus radiodurans (strain ATCC 13939 / DSM 20539 / JCM 16871 / CCUG 27074 / LMG 4051 / NBRC 15346 / NCIMB 9279 / VKM B-1422 / R1), this protein is Imidazolonepropionase.